Here is a 585-residue protein sequence, read N- to C-terminus: Beta-(1--&gt;2)glucan export ATP-binding/permease protein NdvA (585 aa).

The region spanning 21–301 is the ABC transmembrane type-1 domain; that stretch reads VGAIVIANIV…MKAFATQIFE (281 aa). A run of 6 helical transmembrane segments spans residues 22-42, 55-75, 136-156, 158-178, 245-265, and 269-289; these read GAIV…PILF, VAPM…AFVL, QHLA…AMDV, LSLI…VVMS, LNRI…TVLV, and ELGV…IGRL. In terms of domain architecture, ABC transporter spans 335–569; sequence VEFRDISFDF…NGRFAALLRA (235 aa). Residue 368–375 participates in ATP binding; it reads GPTGAGKT.

The protein belongs to the ABC transporter superfamily. Beta-(1--&gt;2)glucan exporter (TC 3.A.1.108.1) family. As to quaternary structure, homodimer.

The protein localises to the cell inner membrane. It carries out the reaction [(1-&gt;2)-beta-D-glucosyl](n)(in) + ATP + H2O = [(1-&gt;2)-beta-D-glucosyl](n)(out) + ADP + phosphate + H(+). In terms of biological role, involved in beta-(1--&gt;2)glucan export which is required for nodulation of legume roots. May be involved in other classes of oligosaccharides export. Transmembrane domains (TMD) form a pore in the inner membrane and the ATP-binding domain (NBD) is responsible for energy generation. This chain is Beta-(1--&gt;2)glucan export ATP-binding/permease protein NdvA, found in Rhizobium meliloti (strain 1021) (Ensifer meliloti).